A 350-amino-acid chain; its full sequence is Ion-translocating oxidoreductase complex subunit D (350 aa).

A run of 3 helical transmembrane segments spans residues 25 to 45, 89 to 109, and 129 to 149; these read ILCA…GTVI, IPPL…IVIV, and VMLL…SVIA. At threonine 185 the chain carries FMN phosphoryl threonine. 5 helical membrane passes run 212–232, 239–259, 264–284, 298–318, and 319–339; these read GFGV…LVML, WHIT…GYLL, FTGP…FFIA, LVFG…GGYP, and DAFA…DHYM.

This sequence belongs to the NqrB/RnfD family. In terms of assembly, the complex is composed of six subunits: RnfA, RnfB, RnfC, RnfD, RnfE and RnfG. Requires FMN as cofactor.

The protein resides in the cell inner membrane. In terms of biological role, part of a membrane-bound complex that couples electron transfer with translocation of ions across the membrane. This is Ion-translocating oxidoreductase complex subunit D from Shewanella sediminis (strain HAW-EB3).